A 130-amino-acid polypeptide reads, in one-letter code: Small ribosomal subunit protein uS9 (130 aa).

A disordered region spans residues 105–130 (TRDPRMKERKKYGLHKARKAPQYSKR). The segment covering 111–130 (KERKKYGLHKARKAPQYSKR) has biased composition (basic residues).

The protein belongs to the universal ribosomal protein uS9 family.

The protein is Small ribosomal subunit protein uS9 of Syntrophomonas wolfei subsp. wolfei (strain DSM 2245B / Goettingen).